The primary structure comprises 268 residues: Undecaprenyl-diphosphatase (268 aa).

Helical transmembrane passes span 4–24 (STTL…FIPV), 50–70 (IQLG…VSVI), 84–104 (VAVL…HGFI), 109–129 (FETP…LLFV), 144–164 (LPLN…VPGV), 185–205 (AEFS…FDLF), 214–234 (SALG…VLVV), and 247–267 (ALFG…LLAG).

Belongs to the UppP family.

Its subcellular location is the cell inner membrane. It carries out the reaction di-trans,octa-cis-undecaprenyl diphosphate + H2O = di-trans,octa-cis-undecaprenyl phosphate + phosphate + H(+). Functionally, catalyzes the dephosphorylation of undecaprenyl diphosphate (UPP). Confers resistance to bacitracin. The polypeptide is Undecaprenyl-diphosphatase (Cereibacter sphaeroides (strain ATCC 17029 / ATH 2.4.9) (Rhodobacter sphaeroides)).